The chain runs to 253 residues: 5'-nucleotidase SurE (253 aa).

The a divalent metal cation site is built by aspartate 8, aspartate 9, serine 39, and asparagine 96.

Belongs to the SurE nucleotidase family. It depends on a divalent metal cation as a cofactor.

The protein resides in the cytoplasm. The enzyme catalyses a ribonucleoside 5'-phosphate + H2O = a ribonucleoside + phosphate. Nucleotidase that shows phosphatase activity on nucleoside 5'-monophosphates. This Rhodopirellula baltica (strain DSM 10527 / NCIMB 13988 / SH1) protein is 5'-nucleotidase SurE.